Here is a 375-residue protein sequence, read N- to C-terminus: MERASCLLLLLLPLVHVSATTPEPCELDDEDFRCVCNFSEPQPDWSEAFQCVSAVEVEIHAGGLNLEPFLKRVDADADPRQYADTVKALRVRRLTVGAAQVPAQLLVGALRVLAYSRLKELTLEDLKITGTMPPLPLEATGLALSSLRLRNVSWATGRSWLAELQQWLKPGLKVLSIAQAHSPAFSCEQVRAFPALTSLDLSDNPGLGERGLMAALCPHKFPAIQNLALRNTGMETPTGVCAALAAAGVQPHSLDLSHNSLRATVNPSAPRCMWSSALNSLNLSFAGLEQVPKGLPAKLRVLDLSCNRLNRAPQPDELPEVDNLTLDGNPFLVPGTALPHEGSMNSGVVPACARSTLSVGVSGTLVLLQGARGFA.

Positions 1–19 are cleaved as a signal peptide; it reads MERASCLLLLLLPLVHVSA. 2 cysteine pairs are disulfide-bonded: Cys25-Cys36 and Cys34-Cys51. Asn37 is a glycosylation site (N-linked (GlcNAc...) asparagine). 11 LRR repeats span residues 54–82, 83–118, 119–144, 145–172, 173–196, 197–224, 225–251, 252–278, 279–299, 300–321, and 322–349; these read AVEVEIHAGGLNLEPFLKRVDADADPRQY, ADTVKALRVRRLTVGAAQVPAQLLVGALRVLAYSRL, KELTLEDLKITGTMPPLPLEATGLAL, SSLRLRNVSWATGRSWLAELQQWLKPGL, KVLSIAQAHSPAFSCEQVRAFPAL, TSLDLSDNPGLGERGLMAALCPHKFPAI, QNLALRNTGMETPTGVCAALAAAGVQP, HSLDLSHNSLRATVNPSAPRCMWSSAL, NSLNLSFAGLEQVPKGLPAKL, RVLDLSCNRLNRAPQPDELPEV, and DNLTLDGNPFLVPGTALPHEGSMNSGVV. Asn151 carries N-linked (GlcNAc...) asparagine glycosylation. Intrachain disulfides connect Cys187/Cys217 and Cys241/Cys272. Residue Asn282 is glycosylated (N-linked (GlcNAc...) asparagine). The interval 290–375 is required for response to bacterial lipopolysaccharide (LPS); the sequence is QVPKGLPAKL…VLLQGARGFA (86 aa). Asn323 carries an N-linked (GlcNAc...) asparagine glycan. A glycan (O-linked (GalNAc...) threonine) is linked at Thr336. A lipid anchor (GPI-anchor amidated asparagine) is attached at Asn345. Residues 346-375 constitute a propeptide, removed in mature form; the sequence is SGVVPACARSTLSVGVSGTLVLLQGARGFA.

As to quaternary structure, interacts with LPS-bound LPB. Belongs to the lipopolysaccharide (LPS) receptor, a multi-protein complex containing at least CD14, LY96 and TLR4. Interacts with LPAR1. Interacts with the TLR2:TLR6 or TLR2:TLR1 heterodimers; upon interaction with ligands such as diacylated lipopeptides and triacylated lipopeptides, respectively. Interacts with MYO18A. Interacts with FSTL1. N- and O- glycosylated. O-glycosylated with a core 1 or possibly core 8 glycan. Detected on macrophages (at protein level). Expressed strongly on the surface of monocytes and weakly on the surface of granulocytes; also expressed by most tissue macrophages.

It localises to the cell membrane. The protein resides in the secreted. The protein localises to the membrane raft. Its subcellular location is the golgi apparatus. Its function is as follows. Coreceptor for bacterial lipopolysaccharide. In concert with LBP, binds to monomeric lipopolysaccharide and delivers it to the LY96/TLR4 complex, thereby mediating the innate immune response to bacterial lipopolysaccharide (LPS). Acts via MyD88, TIRAP and TRAF6, leading to NF-kappa-B activation, cytokine secretion and the inflammatory response. Acts as a coreceptor for TLR2:TLR6 heterodimer in response to diacylated lipopeptides and for TLR2:TLR1 heterodimer in response to triacylated lipopeptides, these clusters trigger signaling from the cell surface and subsequently are targeted to the Golgi in a lipid-raft dependent pathway. Binds electronegative LDL (LDL(-)) and mediates the cytokine release induced by LDL(-). The sequence is that of Monocyte differentiation antigen CD14 (CD14) from Homo sapiens (Human).